The primary structure comprises 96 residues: Small ribosomal subunit protein bS18 (96 aa).

Positions 1 to 20 are disordered; it reads MSHGGKRRSGDGGSEGSSYS.

This sequence belongs to the bacterial ribosomal protein bS18 family. As to quaternary structure, part of the 30S ribosomal subunit. Forms a tight heterodimer with protein bS6.

Its function is as follows. Binds as a heterodimer with protein bS6 to the central domain of the 16S rRNA, where it helps stabilize the platform of the 30S subunit. The protein is Small ribosomal subunit protein bS18 of Anaplasma phagocytophilum (strain HZ).